Here is a 711-residue protein sequence, read N- to C-terminus: Hydroperoxide isomerase ALOXE3 (711 aa).

The PLAT domain occupies 2–119 (AVYRLCVTTG…TVELRPGTAR (118 aa)). The Lipoxygenase domain occupies 120–711 (TICQDSLPLL…PPLIENSVSI (592 aa)). Positions 408, 413, 588, 592, and 711 each coordinate Fe cation.

The protein belongs to the lipoxygenase family. Requires Fe cation as cofactor. Predominantly expressed in skin.

The protein resides in the cytoplasm. The catalysed reaction is a hydroperoxyeicosatetraenoate = a hydroxy-epoxy-eicosatetraenoate. The enzyme catalyses (12R)-hydroperoxy-(5Z,8Z,10E,14Z)-eicosatetraenoate = (8R)-hydroxy-(11R,12R)-epoxy-(5Z,9E,14Z)-eicosatrienoate. It catalyses the reaction (12S)-hydroperoxy-(5Z,8Z,10E,14Z)-eicosatetraenoate = (8R)-hydroxy-(11S,12S)-epoxy-(5Z,9E,14Z)-eicosatrienoate. It carries out the reaction (12S)-hydroperoxy-(5Z,8Z,10E,14Z)-eicosatetraenoate = (10R)-hydroxy-(11S,12S)-epoxy-(5Z,8Z,14Z)-eicosatrienoate. The catalysed reaction is (15S)-hydroperoxy-(5Z,8Z,11Z,13E)-eicosatetraenoate = (13R)-hydroxy-(14S,15S)-epoxy-(5Z,8Z,11Z)-eicosatrienoate. The enzyme catalyses (5S)-hydroperoxy-(6E,8Z,11Z,14Z)-eicosatetraenoate = 7R-hydroxy-5S,6S-epoxy-(8Z,11Z,14Z)-eicosatrienoate. It catalyses the reaction (13S)-hydroperoxy-(9Z,11E)-octadecadienoate = 11-hydroxy-(12S,13S)-epoxy-(9Z)-octadecenoate. It carries out the reaction N-[omega-(9R)-hydroperoxy-(10E,12Z)-octadecadienoyloxy]acyl-beta-D-glucosyl-(1&lt;-&gt;1)-octadecasphing-4E-enine = a N-[omega-(9R,10R)-epoxy-(13R)-hydroxy-(11E)-octadecenoyloxy]acyl-beta-D-glucosyl-(1&lt;-&gt;1)-sphing-4E-enine. The catalysed reaction is a N-[omega-(9R)-hydroperoxy-(10E,12Z)-octadecadienoyloxy]-acylsphin-4E-enine = a N-[omega-(9R,10R)-epoxy-(13R)-hydroxy-(11E)-octadecenoyloxy]-acylsphing-4E-enine. The enzyme catalyses a hydroperoxyeicosatetraenoate = an oxoeicosatetraenoate + H2O. It catalyses the reaction (12R)-hydroperoxy-(5Z,8Z,10E,14Z)-eicosatetraenoate = 12-oxo-(5Z,8Z,10E,14Z)-eicosatetraenoate + H2O. It carries out the reaction (12S)-hydroperoxy-(5Z,8Z,10E,14Z)-eicosatetraenoate = 12-oxo-(5Z,8Z,10E,14Z)-eicosatetraenoate + H2O. The catalysed reaction is (15S)-hydroperoxy-(5Z,8Z,11Z,13E)-eicosatetraenoate = 15-oxo-(5Z,8Z,11Z,13E)-eicosatetraenoate + H2O. The enzyme catalyses (13S)-hydroperoxy-(9Z,11E)-octadecadienoate = 13-oxo-(9Z,11E)-octadecadienoate + H2O. It catalyses the reaction (8S)-hydroperoxy-(5Z,9E,11Z,14Z)-eicosatetraenoate = (10R)-hydroxy-(8S,9S)-epoxy-(5Z,11Z,14Z)-eicosatrienoate. It carries out the reaction (8R)-hydroperoxy-(5Z,9E,11Z,14Z)-eicosatetraenoate = 8-oxo-(5Z,9E,11Z,14Z)-eicosatetraenoate + H2O. The catalysed reaction is (8S)-hydroperoxy-(5Z,9E,11Z,14Z)-eicosatetraenoate = 8-oxo-(5Z,9E,11Z,14Z)-eicosatetraenoate + H2O. It functions in the pathway lipid metabolism; hydroperoxy eicosatetraenoic acid biosynthesis. The protein operates within lipid metabolism; sphingolipid metabolism. Lipoxygenase activity is activated by 13(S)-HPODE leading to an active free ferric enzyme. The lipoxygenase and hydroperoxide isomerase activities are in competition and are reciprocally regulated by oxygen. The oxygen reacts with an epoxyallylic radical intermediate leading to an epoxyallylic peroxyl radical, which, due to its limited reactivity within the enzyme active site, it dissociates and leaves the enzyme in the activated free ferric state. Non-heme iron-containing lipoxygenase which is atypical in that it displays a prominent hydroperoxide isomerase activity and a reduced lipoxygenases activity. The hydroperoxide isomerase activity catalyzes the isomerization of hydroperoxides, derived from arachidonic and linoleic acid by ALOX12B, into hepoxilin-type epoxyalcohols and ketones. In presence of oxygen, oxygenates polyunsaturated fatty acids, including arachidonic acid, to produce fatty acid hydroperoxides. In the skin, acts downstream of ALOX12B on the linoleate moiety of esterified omega-hydroxyacyl-sphingosine (EOS) ceramides to produce an epoxy-ketone derivative, a crucial step in the conjugation of omega-hydroxyceramide to membrane proteins. Therefore plays a crucial role in the synthesis of corneocytes lipid envelope and the establishment of the skin barrier to water loss. In parallel, it may have a signaling function in barrier formation through the production of hepoxilins metabolites. Also plays a role in adipocyte differentiation through hepoxilin A3 and hepoxilin B3 production which in turn activate PPARG. Through the production of hepoxilins in the spinal cord, it may regulate inflammatory tactile allodynia. The sequence is that of Hydroperoxide isomerase ALOXE3 from Homo sapiens (Human).